Reading from the N-terminus, the 24-residue chain is Positive regulator of RepFIC repA1 expression (24 aa).

The protein is Positive regulator of RepFIC repA1 expression (repL) of Escherichia coli.